We begin with the raw amino-acid sequence, 727 residues long: NADH-ubiquinone oxidoreductase 75 kDa subunit, mitochondrial (727 aa).

A mitochondrion-targeting transit peptide spans 1-23; sequence MLRIPVRKALVGLSKSSKGCVRT. Residues 30–108 enclose the 2Fe-2S ferredoxin-type domain; that stretch reads NLIEVFVDGQ…GWNILTNSEK (79 aa). [2Fe-2S] cluster-binding residues include cysteine 64, cysteine 75, and cysteine 78. Lysine 84 bears the N6-acetyllysine mark. Cysteine 92 contacts [2Fe-2S] cluster. Positions 108-147 constitute a 4Fe-4S His(Cys)3-ligated-type domain; the sequence is KTKKAREGVMEFLLANHPLDCPICDQGGECDLQDQSMMFG. Histidine 124, cysteine 128, cysteine 131, cysteine 137, cysteine 176, cysteine 179, cysteine 182, and cysteine 226 together coordinate [4Fe-4S] cluster. In terms of domain architecture, 4Fe-4S Mo/W bis-MGD-type spans 245 to 301; the sequence is TRKTESIDVMDAVGSNIVVSTRTGEVMRILPRMHEDINEEWISDKTRFAYDGLKRQR. Residues lysine 499 and lysine 709 each carry the N6-acetyllysine modification.

This sequence belongs to the complex I 75 kDa subunit family. In terms of assembly, core subunit of respiratory chain NADH dehydrogenase (Complex I) which is composed of 45 different subunits. This is the largest subunit of complex I and it is a component of the iron-sulfur (IP) fragment of the enzyme. Complex I associates with ubiquinol-cytochrome reductase complex (Complex III) to form supercomplexes. Interacts with MDM2 and AKAP1. [2Fe-2S] cluster is required as a cofactor. It depends on [4Fe-4S] cluster as a cofactor.

It localises to the mitochondrion inner membrane. It carries out the reaction a ubiquinone + NADH + 5 H(+)(in) = a ubiquinol + NAD(+) + 4 H(+)(out). Functionally, core subunit of the mitochondrial membrane respiratory chain NADH dehydrogenase (Complex I) which catalyzes electron transfer from NADH through the respiratory chain, using ubiquinone as an electron acceptor. Essential for catalysing the entry and efficient transfer of electrons within complex I. Plays a key role in the assembly and stability of complex I and participates in the association of complex I with ubiquinol-cytochrome reductase complex (Complex III) to form supercomplexes. This Bos taurus (Bovine) protein is NADH-ubiquinone oxidoreductase 75 kDa subunit, mitochondrial (NDUFS1).